A 684-amino-acid polypeptide reads, in one-letter code: MIDQYKHQQLRIGSVSPQQMSAWAKRILPNGEIVGEVTKPYTFHYKTNKPEKDGLFCERIFGPIKSGICACGNYRVIRDKKDDPKFCEQCGVEFIDSRIRRYQMGYIKLACLVTHAWYLKRLPSYIANLLDKPLKELESLVYGDVSFARPVVKKPTFLRLRGSFEYEIQSWKHSIPLFFTTRGFDIFRNREISSGAVAIREQLADLDLRIIMDYSLIEWKELGKEGSPDNENEWEDRKVGRRKNFLVRRIELAKHFIRTNIEPEWMVLCLLPVLPPELRPIIQVDGGKLMSSDINELYRRVIYRNNTLIDLLTTSRSTPGELVICQEKLVQEAVDTLLDNGIRGQPMRDGHNKVYKSFSDIIEGKEGRFRETLLGKRVDYSGRSVIIVGPSLSLHRCGLPGEIAIELFQTFLIRGLIRKHFASNIGIAKSKIRQKEPIVWEILQEVMQGHPVLLNRAPTLHRLGIQAFQPILVEGRAICLHPLVCKGFNADFDGDQMAVHVPLSLEAQAEARLLMFSHTNLLSPAIADPISVPTQDMLIGLYILTSGNRRGIYSNRYNPRNCRNLKNERIPNNNYKYTKKKEPFFCNSYDAIGAYQQKRITFDSPLWLRWRLDLRIISSREVPIEVHYESLGTYHEIYGHYLVVRSIKKQMRSIYIRTNVGHISFYREIEEAVQGFCRAYSYDI.

The Zn(2+) site is built by C69, C71, C87, and C90. D491, D493, and D495 together coordinate Mg(2+).

Belongs to the RNA polymerase beta' chain family. RpoC1 subfamily. As to quaternary structure, in plastids the minimal PEP RNA polymerase catalytic core is composed of four subunits: alpha, beta, beta', and beta''. When a (nuclear-encoded) sigma factor is associated with the core the holoenzyme is formed, which can initiate transcription. Mg(2+) serves as cofactor. The cofactor is Zn(2+).

The protein localises to the plastid. The protein resides in the chloroplast. The catalysed reaction is RNA(n) + a ribonucleoside 5'-triphosphate = RNA(n+1) + diphosphate. Functionally, DNA-dependent RNA polymerase catalyzes the transcription of DNA into RNA using the four ribonucleoside triphosphates as substrates. The polypeptide is DNA-directed RNA polymerase subunit beta' (Phaseolus vulgaris (Kidney bean)).